The sequence spans 139 residues: Hydrogenase maturation factor HypA (139 aa).

His-2 is a binding site for Ni(2+). Cys-75, Cys-78, Cys-111, and Cys-114 together coordinate Zn(2+).

It belongs to the HypA/HybF family.

In terms of biological role, involved in the maturation of [NiFe] hydrogenases. Required for nickel insertion into the metal center of the hydrogenase. The chain is Hydrogenase maturation factor HypA from Ignicoccus hospitalis (strain KIN4/I / DSM 18386 / JCM 14125).